A 366-amino-acid polypeptide reads, in one-letter code: 3-dehydroquinate synthase (366 aa).

NAD(+) contacts are provided by residues 74-79, 108-112, 132-133, lysine 144, lysine 153, and 171-174; these read SGEAAK, GVVGD, TT, and FLRT. 3 residues coordinate Zn(2+): glutamate 186, histidine 249, and histidine 266.

Belongs to the sugar phosphate cyclases superfamily. Dehydroquinate synthase family. Requires Co(2+) as cofactor. The cofactor is Zn(2+). NAD(+) is required as a cofactor.

It localises to the cytoplasm. The enzyme catalyses 7-phospho-2-dehydro-3-deoxy-D-arabino-heptonate = 3-dehydroquinate + phosphate. It functions in the pathway metabolic intermediate biosynthesis; chorismate biosynthesis; chorismate from D-erythrose 4-phosphate and phosphoenolpyruvate: step 2/7. Functionally, catalyzes the conversion of 3-deoxy-D-arabino-heptulosonate 7-phosphate (DAHP) to dehydroquinate (DHQ). This Geobacillus thermodenitrificans (strain NG80-2) protein is 3-dehydroquinate synthase.